Reading from the N-terminus, the 203-residue chain is Dephospho-CoA kinase (203 aa).

The DPCK domain occupies 4-203 (VIGITGGIAT…EEGYIQSESE (200 aa)). 12–17 (ATGKST) serves as a coordination point for ATP.

The protein belongs to the CoaE family.

Its subcellular location is the cytoplasm. It catalyses the reaction 3'-dephospho-CoA + ATP = ADP + CoA + H(+). It participates in cofactor biosynthesis; coenzyme A biosynthesis; CoA from (R)-pantothenate: step 5/5. Functionally, catalyzes the phosphorylation of the 3'-hydroxyl group of dephosphocoenzyme A to form coenzyme A. The chain is Dephospho-CoA kinase from Staphylococcus epidermidis (strain ATCC 35984 / DSM 28319 / BCRC 17069 / CCUG 31568 / BM 3577 / RP62A).